Consider the following 119-residue polypeptide: Small ribosomal subunit protein bS6 (119 aa).

The tract at residues 95–119 is disordered; the sequence is AVTEPSPLAKGNEKREDRKESEDAE. Over residues 105-119 the composition is skewed to basic and acidic residues; that stretch reads GNEKREDRKESEDAE.

It belongs to the bacterial ribosomal protein bS6 family.

In terms of biological role, binds together with bS18 to 16S ribosomal RNA. In Halorhodospira halophila (strain DSM 244 / SL1) (Ectothiorhodospira halophila (strain DSM 244 / SL1)), this protein is Small ribosomal subunit protein bS6.